The chain runs to 707 residues: Acyl-CoA ligase 891, peroxisomal (707 aa).

259–270 (INYTSGTTGPPK) is a binding site for ATP. Residues 525–549 (DGWFRTGDVCTIDEKGRFIIIDRRK) are fatty acid-binding. The short motif at 705–707 (AKL) is the Peroxisome targeting signal element.

It belongs to the ATP-dependent AMP-binding enzyme family.

Its subcellular location is the peroxisome matrix. The catalysed reaction is (4E,8E)-10-(4-hydroxy-6-methoxy-7-methyl-3-oxo-1,3-dihydro-2-benzofuran-5-yl)-4,8-dimethyldeca-4,8-dienoate + ATP + CoA = (4E,8E)-10-(4-hydroxy-6-methoxy-7-methyl-3-oxo-1,3-dihydro-2-benzofuran-5-yl)-4,8-dimethyldeca-4,8-dienoyl-CoA + AMP + diphosphate. It participates in secondary metabolite biosynthesis; terpenoid biosynthesis. Acyl-CoA ligase involved in the biosynthesis of mycophenolic acid (MPA), the first isolated antibiotic natural product in the world obtained from a culture of Penicillium brevicompactum in 1893. The peroxisomal acyl-CoA ligase 891 converts the intermediate MFDHMP-3C into MFDHMP-3C-CoA which impairs its diffusion from the peroxisome. The first step of the pathway is the synthesis of 5-methylorsellinic acid (5MOA) by the cytosolic polyketide synthase mpaC. 5MOA is then converted to the phthalide compound 5,7-dihydroxy-4,6-dimethylphthalide (DHMP) by the endoplasmic reticulum-bound cytochrome P450 monooxygenase mpaDE. MpaDE first catalyzes hydroxylation of 5-MOA to 4,6-dihydroxy-2-(hydroxymethyl)-3-methylbenzoic acid (DHMB). MpaDE then acts as a lactone synthase that catalyzes the ring closure to convert DHMB into DHMP. The next step is the prenylation of DHMP by the Golgi apparatus-associated prenyltransferase mpaA to yield farnesyl-DHMP (FDHMP). The ER-bound oxygenase mpaB then mediates the oxidative cleavage the C19-C20 double bond in FDHMP to yield FDHMP-3C via a mycophenolic aldehyde intermediate. The O-methyltransferase mpaG catalyzes the methylation of FDHMP-3C to yield MFDHMP-3C. After the cytosolic methylation of FDHMP-3C, MFDHMP-3C enters into peroxisomes probably via free diffusion due to its low molecular weight. Upon a peroxisomal CoA ligation reaction, catalyzed by a beta-oxidation component enzyme acyl-CoA ligase ACL891, MFDHMP-3C-CoA would then be restricted to peroxisomes for the following beta-oxidation pathway steps. The peroxisomal beta-oxidation machinery than converts MFDHMP-3C-CoA into MPA_CoA, via a beta-oxidation chain-shortening process. Finally mpaH acts as a peroxisomal acyl-CoA hydrolase with high substrate specificity toward MPA-CoA to release the final product MPA. In Penicillium roqueforti (strain FM164), this protein is Acyl-CoA ligase 891, peroxisomal.